Here is a 124-residue protein sequence, read N- to C-terminus: Large ribosomal subunit protein bL12 (124 aa).

This sequence belongs to the bacterial ribosomal protein bL12 family. As to quaternary structure, homodimer. Part of the ribosomal stalk of the 50S ribosomal subunit. Forms a multimeric L10(L12)X complex, where L10 forms an elongated spine to which 2 to 4 L12 dimers bind in a sequential fashion. Binds GTP-bound translation factors.

In terms of biological role, forms part of the ribosomal stalk which helps the ribosome interact with GTP-bound translation factors. Is thus essential for accurate translation. This is Large ribosomal subunit protein bL12 from Burkholderia ambifaria (strain MC40-6).